The chain runs to 100 residues: MKQEKLSLHDVLVRPIITEKALRLREQRKYVFEVNPLANKNQIKEAVEKIFNVKVDKVNVINMKPKPKRRGIFEGRTRSWKKAVVTLKEGYTIKELEGEH.

The protein belongs to the universal ribosomal protein uL23 family. In terms of assembly, part of the 50S ribosomal subunit. Contacts protein L29, and trigger factor when it is bound to the ribosome.

In terms of biological role, one of the early assembly proteins it binds 23S rRNA. One of the proteins that surrounds the polypeptide exit tunnel on the outside of the ribosome. Forms the main docking site for trigger factor binding to the ribosome. The polypeptide is Large ribosomal subunit protein uL23 (Thermotoga neapolitana (strain ATCC 49049 / DSM 4359 / NBRC 107923 / NS-E)).